A 674-amino-acid chain; its full sequence is Pre-mRNA-splicing factor cwf4 (674 aa).

HAT repeat units lie at residues 50–82 (EFQGRKRKEFEDAIRRNRLAMGHWMRYGQWELD), 84–116 (KEFARARSVFERALDVDSTYIPLWLKYIECEMK), 118–150 (RNINHARNLFDRAVTQLPRVDKLWYKYVYMEEM), 152–183 (GNITGCRQVFERWLKWEPDENCWMSYIRMERR), 185–216 (HENERARGIYERFVVVHPEVTNWLRWARFEEE), 218–253 (GNAANVRQVYLAAIDALGQEFLNERFFIAFAKFEIR), 255–289 (KEYERARTIFKYAIDFMPRSKSMELYKEYTHFEKQ), 299–331 (TVLDKRRLQYEKLLKDSPYDYDTWLDLLKLEES), 333–367 (GDINTIRETYEKAIAKVPEVVEKNAWRRYVYIWLN), 377–413 (KDVDRARKVYQEALKLIPHKKFTFAKLWLMYAMFELR), 415–446 (RKIDVARKTLGRALGMCPKPKLFRGYIEFEDA), 448–480 (KQFDRCRILYEKWILYDPEACAPWLGYAALETK), 482–516 (GDSDRARALYNLAVNQPILETPELVWKAYIDFEFE), 518–549 (MEYGKARSIYQQLLRTAPHVKVWISFANFEIA), 567–608 (TAVV…MHGT), and 610–643 (DTRKHVSSLMPQVVKKRRRLEDGSFEEYLDYLFP).

The protein belongs to the crooked-neck family. In terms of assembly, belongs to the 40S cdc5-associated complex (or cwf complex), a spliceosome sub-complex reminiscent of a late-stage spliceosome composed of the U2, U5 and U6 snRNAs and at least brr2, cdc5, cwf2/prp3, cwf3/syf1, cwf4/syf3, cwf5/ecm2, spp42/cwf6, cwf7/spf27, cwf8, cwf9, cwf10, cwf11, cwf12, prp45/cwf13, cwf14, cwf15, cwf16, cwf17, cwf18, cwf19, cwf20, cwf21, cwf22, cwf23, cwf24, cwf25, cwf26, cyp7/cwf27, cwf28, cwf29/ist3, lea1, msl1, prp5/cwf1, prp10, prp12/sap130, prp17, prp22, sap61, sap62, sap114, sap145, slu7, smb1, smd1, smd3, smf1, smg1 and syf2.

It is found in the nucleus. Its function is as follows. Involved in pre-mRNA splicing and cell cycle progression. Required for the spliceosome assembly and initiation of the DNA replication. The chain is Pre-mRNA-splicing factor cwf4 (cwf4) from Schizosaccharomyces pombe (strain 972 / ATCC 24843) (Fission yeast).